We begin with the raw amino-acid sequence, 376 residues long: Chaperone protein DnaJ (376 aa).

The J domain maps to 5–70 (DYYEVLGVAR…EKRARYDRFG (66 aa)). A CR-type zinc finger spans residues 137-215 (GDEVTLRLPK…CKGSGQTQQV (79 aa)). C150, C153, C167, C170, C189, C192, C203, and C206 together coordinate Zn(2+). CXXCXGXG motif repeat units lie at residues 150–157 (CDECGGSG), 167–174 (CRHCGGAG), 189–196 (CPVCRGEG), and 203–210 (CPKCKGSG).

This sequence belongs to the DnaJ family. Homodimer. Zn(2+) serves as cofactor.

It is found in the cytoplasm. Its function is as follows. Participates actively in the response to hyperosmotic and heat shock by preventing the aggregation of stress-denatured proteins and by disaggregating proteins, also in an autonomous, DnaK-independent fashion. Unfolded proteins bind initially to DnaJ; upon interaction with the DnaJ-bound protein, DnaK hydrolyzes its bound ATP, resulting in the formation of a stable complex. GrpE releases ADP from DnaK; ATP binding to DnaK triggers the release of the substrate protein, thus completing the reaction cycle. Several rounds of ATP-dependent interactions between DnaJ, DnaK and GrpE are required for fully efficient folding. Also involved, together with DnaK and GrpE, in the DNA replication of plasmids through activation of initiation proteins. In Nitratidesulfovibrio vulgaris (strain ATCC 29579 / DSM 644 / CCUG 34227 / NCIMB 8303 / VKM B-1760 / Hildenborough) (Desulfovibrio vulgaris), this protein is Chaperone protein DnaJ.